The primary structure comprises 157 residues: Protein Smg (157 aa).

The protein belongs to the Smg family.

This chain is Protein Smg, found in Shigella boydii serotype 18 (strain CDC 3083-94 / BS512).